A 348-amino-acid chain; its full sequence is D-alanine--D-alanine ligase (348 aa).

One can recognise an ATP-grasp domain in the interval 132 to 334 (KRVLESAGIP…YSDLIEELVS (203 aa)). 162-217 (LETLSFPIFVKPANMGSSVGISKAESIEGLREAIALALKYDSRILIEQGVVAREIE) serves as a coordination point for ATP. 3 residues coordinate Mg(2+): aspartate 288, glutamate 301, and asparagine 303.

The protein belongs to the D-alanine--D-alanine ligase family. The cofactor is Mg(2+). It depends on Mn(2+) as a cofactor.

The protein localises to the cytoplasm. The enzyme catalyses 2 D-alanine + ATP = D-alanyl-D-alanine + ADP + phosphate + H(+). The protein operates within cell wall biogenesis; peptidoglycan biosynthesis. Functionally, cell wall formation. In Streptococcus uberis (strain ATCC BAA-854 / 0140J), this protein is D-alanine--D-alanine ligase.